We begin with the raw amino-acid sequence, 453 residues long: Gamma-aminobutyric acid receptor subunit alpha-6 (453 aa).

Residues Met1 to Gly19 form the signal peptide. Over Lys20–Phe243 the chain is Extracellular. Asn31 is a glycosylation site (N-linked (GlcNAc...) asparagine). Arg84 contributes to the 4-aminobutanoate binding site. N-linked (GlcNAc...) asparagine glycans are attached at residues Asn128 and Asn141. Thr147 serves as a coordination point for 4-aminobutanoate. A disulfide bridge links Cys156 with Cys170. The helical transmembrane segment at Met244 to Ile264 threads the bilayer. The Cytoplasmic portion of the chain corresponds to Asn265–Pro270. A helical membrane pass occupies residues Ala271–Ala290. Residues Arg291 to Asp304 lie on the Extracellular side of the membrane. Residues Trp305–Asn325 form a helical membrane-spanning segment. Topologically, residues Tyr326–Arg422 are cytoplasmic. Thr403 bears the Phosphothreonine mark. A helical membrane pass occupies residues Ile423–Lys443. Residues Asp444–Glu453 are Extracellular-facing.

This sequence belongs to the ligand-gated ion channel (TC 1.A.9) family. Gamma-aminobutyric acid receptor (TC 1.A.9.5) subfamily. GABRA6 sub-subfamily. Heteropentamer, formed by a combination of alpha (GABRA1-6), beta (GABRB1-3), gamma (GABRG1-3), delta (GABRD), epsilon (GABRE), rho (GABRR1-3), pi (GABRP) and theta (GABRQ) chains, each subunit exhibiting distinct physiological and pharmacological properties. Binds UBQLN1. In terms of tissue distribution, expressed in brain, in cerebellar granule cells.

The protein resides in the postsynaptic cell membrane. It is found in the cell membrane. The catalysed reaction is chloride(in) = chloride(out). In terms of biological role, alpha subunit of the heteropentameric ligand-gated chloride channel gated by gamma-aminobutyric acid (GABA), a major inhibitory neurotransmitter in the brain. GABA-gated chloride channels, also named GABA(A) receptors (GABAAR), consist of five subunits arranged around a central pore and contain GABA active binding site(s) located at the alpha and beta subunit interface(s). When activated by GABA, GABAARs selectively allow the flow of chloride anions across the cell membrane down their electrochemical gradient. Alpha-6/GABRA6 subunits are found at both synaptic and extrasynaptic sites. Chloride influx into the postsynaptic neuron following GABAAR opening decreases the neuron ability to generate a new action potential, thereby reducing nerve transmission. Extrasynaptic alpha-6-containing receptors contribute to the tonic GABAergic inhibition. Alpha-6 subunits are also present on glutamatergic synapses. The chain is Gamma-aminobutyric acid receptor subunit alpha-6 from Homo sapiens (Human).